A 299-amino-acid chain; its full sequence is Small ribosomal subunit protein uS2 (299 aa).

Positions 259-291 are enriched in low complexity; sequence AAASAAGPTSWEADGADWAASSAPAAAGESWAE. The interval 259 to 299 is disordered; it reads AAASAAGPTSWEADGADWAASSAPAAAGESWAETQPAEGKW.

This sequence belongs to the universal ribosomal protein uS2 family. In terms of assembly, component of the small ribosomal subunit. Mature ribosomes consist of a small (40S) and a large (60S) subunit. The 40S subunit contains about 33 different proteins and 1 molecule of RNA (18S). The 60S subunit contains about 49 different proteins and 3 molecules of RNA (25S, 5.8S and 5S). Interacts with rps21.

Its subcellular location is the cytoplasm. Functionally, required for the assembly and/or stability of the 40S ribosomal subunit. Required for the processing of the 20S rRNA-precursor to mature 18S rRNA in a late step of the maturation of 40S ribosomal subunits. The sequence is that of Small ribosomal subunit protein uS2 (rps0) from Aspergillus flavus (strain ATCC 200026 / FGSC A1120 / IAM 13836 / NRRL 3357 / JCM 12722 / SRRC 167).